A 597-amino-acid polypeptide reads, in one-letter code: Probable bifunctional ADP-ribose hydrolase/ADP-ribosyltransferase (597 aa).

Residues 99 to 299 form the Macro domain; the sequence is SRLIKHGDLG…FYSKLLGPSH (201 aa). The ADP-D-ribose site is built by aspartate 118, isoleucine 119, and asparagine 133. Positions 139, 144, and 146 each coordinate Zn(2+). Positions 146, 147, 148, 244, 245, 246, and 248 each coordinate ADP-D-ribose. The 291-residue stretch at 307 to 597 folds into the Deacetylase sirtuin-type domain; the sequence is ENTPQGSLSL…IGRAIPLLLE (291 aa). Residues alanine 333, 418–421, and glutamine 438 each bind NAD(+); that span reads SNAD. Zn(2+) contacts are provided by cysteine 446, cysteine 450, cysteine 485, and cysteine 488. Valine 584 is a binding site for NAD(+).

In the N-terminal section; belongs to the MacroD-type family. Zn-Macro subfamily. The protein in the C-terminal section; belongs to the sirtuin family. Class M subfamily. Monomer. The cofactor is Zn(2+).

It carries out the reaction 5-O-(ADP-D-ribosyl)-L-glutamyl-[protein] + H2O = L-glutamyl-[protein] + ADP-D-ribose + H(+). Functionally, is probably a bifunctional enzyme with ADP-ribosyltransferase and ADP-ribosylhydrolase activities. In vitro, can act as an ADP-ribosylhydrolase that hydrolyzes ADP-ribosyl-glutamate bonds. It can remove the ADP-ribosyl modification from the human mono-ADP-ribosylated PARP1 E988Q mutant, which is primarily modified on glutamate site with only minor aspartate contribution. It cannot hydrolyze the ADP-ribosyl-arpartate bond in ribosylated S.pyogenes GcvH-L. In Fusarium oxysporum f. sp. cubense, this protein is Probable bifunctional ADP-ribose hydrolase/ADP-ribosyltransferase.